We begin with the raw amino-acid sequence, 153 residues long: SQPHTKPSVFVMKNGTNVACLVKEFYPKDIRINLVSSKKITEFDPAIVISPSGKYNAVKLGKYEDSNSVTCSVQHDNKTVHSTDFEVKTDSTDHVKPKETENTKQPSKSCHKPKAIVHTEKVNMMSLTVLGLRMLFAKTVAVNFLLTAKLFFL.

An N-linked (GlcNAc...) asparagine glycan is attached at N14. A disulfide bond links C20 and C71. N77 carries an N-linked (GlcNAc...) asparagine glycan. Over residues 85-102 (FEVKTDSTDHVKPKETEN) the composition is skewed to basic and acidic residues. The tract at residues 85 to 112 (FEVKTDSTDHVKPKETENTKQPSKSCHK) is disordered. Residues 130 to 152 (LGLRMLFAKTVAVNFLLTAKLFF) form a helical membrane-spanning segment.

As to quaternary structure, gamma-delta TR is a heterodimer composed of a gamma and delta chain; disulfide-linked. The gamma-delta TR is associated with the transmembrane signaling CD3 coreceptor proteins following the stoichiometry: a single gamma-delta TR heterodimer associates with one CD3D-CD3E heterodimer, one CD3G-CD3E heterodimer and one CD247 homodimer forming a stable octameric structure. Upon activation, gamma-delta TR complex associates with FCER1G to initiate intracellular signaling.

Its subcellular location is the cell membrane. Its function is as follows. Constant region of T cell receptor (TR) delta chain that participates in the antigen recognition. Gamma-delta TRs recognize a variety of self and foreign non-peptide antigens frequently expressed at the epithelial boundaries between the host and external environment, including endogenous lipids presented by MH-like protein CD1D and phosphoantigens presented by butyrophilin-like molecule BTN3A1. Upon antigen recognition induces rapid, innate-like immune responses involved in pathogen clearance and tissue repair. Binding of gamma-delta TR complex to antigen triggers phosphorylation of immunoreceptor tyrosine-based activation motifs (ITAMs) in the CD3 chains by the LCK and FYN kinases, allowing the recruitment, phosphorylation, and activation of ZAP70 that facilitates phosphorylation of the scaffolding proteins LCP2 and LAT. This lead to the formation of a supramolecular signalosome that recruits the phospholipase PLCG1, resulting in calcium mobilization and ERK activation, ultimately leading to T cell expansion and differentiation into effector cells. Gamma-delta TRs are produced through somatic rearrangement of a limited repertoire of variable (V), diversity (D), and joining (J) genes. The potential diversity of gamma-delta TRs is conferred by the unique ability to rearrange (D) genes in tandem and to utilize all three reading frames. The combinatorial diversity is considerably increased by the sequence exonuclease trimming and random nucleotide (N) region additions which occur during the V-(D)-J rearrangements. The protein is T cell receptor delta constant of Homo sapiens (Human).